The sequence spans 590 residues: MTLHSNSTTSPLFPNISSSWIHSPSDAGLPRGTVTHFGSYNVSRAAGNFSSPNGPTDDPLGGHTVWQVVFIAFLTGILALVTIIGNILVIVSFKVNKQLKTVNNYFLLSLACADLIIGVISMNLFTTYIIMNRWALGNLACDLWLAIDYVASNASVMNLLVISFDRYFSITRPLTYRAKRTTKRAGVMIGLAWVISFVLWAPAILFWQYFVGKRTVPPGECFIQFLSEPTITFGTAIAAFYMPVTIMTILYWRIYKETEKRTKELAGLQASGTEAETENFVHPTGSSRSCSSYELQQQSMKRANRRKYGRCHFWFTTKSWKPSSEQMDQDHSSSDSWNNNDAAASLENSASSDEEDIGSETRAIYSIVLKLPGHSTILNSTKLPSSDNLQVPEEELGMVDLERKANKLQAQKSVDDGGSFPKSFSKLPIQLESAVDTAKTADVNSSVGKTTATLPLSFKEATLAKRFALKTRSQITKRKRMSLVKEKKAAQTLSAILLAFIITWTPYNIMVLVNTFCDSCIPKTFWNLGYWLCYINSTVNPVCYALCNKTFRTTFKMLLLCQCDKKKRRKQQYQQRQSVIFHKRAPEQAL.

At methionine 1–glutamine 67 the chain is on the extracellular side. 4 N-linked (GlcNAc...) asparagine glycosylation sites follow: asparagine 6, asparagine 15, asparagine 41, and asparagine 48. A helical transmembrane segment spans residues valine 68–valine 91. The Cytoplasmic portion of the chain corresponds to serine 92–asparagine 104. Residues tyrosine 105–isoleucine 130 traverse the membrane as a helical segment. The Extracellular portion of the chain corresponds to methionine 131–aspartate 142. Residues cysteine 141 and cysteine 221 are joined by a disulfide bond. A helical membrane pass occupies residues leucine 143–phenylalanine 164. The Cytoplasmic segment spans residues aspartate 165–arginine 184. A helical transmembrane segment spans residues alanine 185 to phenylalanine 206. Topologically, residues tryptophan 207 to proline 229 are extracellular. Residues threonine 230–tryptophan 252 traverse the membrane as a helical segment. Topologically, residues arginine 253–glutamine 491 are cytoplasmic. The Basolateral sorting signal signature appears at alanine 275–valine 281. A disordered region spans residues serine 323–isoleucine 357. Over residues serine 334–serine 345 the composition is skewed to low complexity. Residue serine 385 is modified to Phosphoserine. A helical membrane pass occupies residues threonine 492–asparagine 514. At threonine 515–tryptophan 526 the chain is on the extracellular side. The cysteines at positions 517 and 520 are disulfide-linked. The helical transmembrane segment at asparagine 527–leucine 546 threads the bilayer. Residues cysteine 547–leucine 590 are Cytoplasmic-facing.

Belongs to the G-protein coupled receptor 1 family. Muscarinic acetylcholine receptor subfamily. CHRM3 sub-subfamily. As to quaternary structure, homodimer; the dimers can form tetramers. Interacts with NALCN. Interacts with TMEM147.

Its subcellular location is the cell membrane. It is found in the postsynaptic cell membrane. It localises to the basolateral cell membrane. The protein localises to the endoplasmic reticulum membrane. In terms of biological role, the muscarinic acetylcholine receptor mediates various cellular responses, including inhibition of adenylate cyclase, breakdown of phosphoinositides and modulation of potassium channels through the action of G proteins. Primary transducing effect is Pi turnover. In Pongo pygmaeus (Bornean orangutan), this protein is Muscarinic acetylcholine receptor M3 (CHRM3).